The following is a 104-amino-acid chain: NADH-quinone oxidoreductase subunit K (104 aa).

3 helical membrane-spanning segments follow: residues 4–24 (VPAS…LFGA), 31–51 (VIVL…FVAF), and 67–87 (LFTM…LIAL).

Belongs to the complex I subunit 4L family. In terms of assembly, NDH-1 is composed of 14 different subunits. Subunits NuoA, H, J, K, L, M, N constitute the membrane sector of the complex.

The protein resides in the cell membrane. The enzyme catalyses a quinone + NADH + 5 H(+)(in) = a quinol + NAD(+) + 4 H(+)(out). In terms of biological role, NDH-1 shuttles electrons from NADH, via FMN and iron-sulfur (Fe-S) centers, to quinones in the respiratory chain. The immediate electron acceptor for the enzyme in this species is believed to be a menaquinone. Couples the redox reaction to proton translocation (for every two electrons transferred, four hydrogen ions are translocated across the cytoplasmic membrane), and thus conserves the redox energy in a proton gradient. The protein is NADH-quinone oxidoreductase subunit K of Bacillus anthracis (strain A0248).